The following is a 272-amino-acid chain: Hemin import ATP-binding protein HmuV (272 aa).

The 254-residue stretch at L2 to R255 folds into the ABC transporter domain. Residue G34 to S41 participates in ATP binding.

This sequence belongs to the ABC transporter superfamily. Heme (hemin) importer (TC 3.A.1.14.5) family. In terms of assembly, the complex is composed of two ATP-binding proteins (HmuV), two transmembrane proteins (HmuU) and a solute-binding protein (HmuT).

The protein localises to the cell inner membrane. In terms of biological role, part of the ABC transporter complex HmuTUV involved in hemin import. Responsible for energy coupling to the transport system. The sequence is that of Hemin import ATP-binding protein HmuV from Burkholderia thailandensis (strain ATCC 700388 / DSM 13276 / CCUG 48851 / CIP 106301 / E264).